A 262-amino-acid chain; its full sequence is Shikimate dehydrogenase (NADP(+)) (262 aa).

Shikimate contacts are provided by residues 15 to 17 and T62; that span reads SRS. The active-site Proton acceptor is the K66. E78 provides a ligand contact to NADP(+). Residues N87 and D102 each coordinate shikimate. Residues 126–130, 150–155, and M214 each bind NADP(+); these read GAGGA and NRTLAR. Y216 contributes to the shikimate binding site. Residue G236 participates in NADP(+) binding.

It belongs to the shikimate dehydrogenase family. Homodimer.

It catalyses the reaction shikimate + NADP(+) = 3-dehydroshikimate + NADPH + H(+). The protein operates within metabolic intermediate biosynthesis; chorismate biosynthesis; chorismate from D-erythrose 4-phosphate and phosphoenolpyruvate: step 4/7. Functionally, involved in the biosynthesis of the chorismate, which leads to the biosynthesis of aromatic amino acids. Catalyzes the reversible NADPH linked reduction of 3-dehydroshikimate (DHSA) to yield shikimate (SA). The sequence is that of Shikimate dehydrogenase (NADP(+)) from Acinetobacter baumannii (strain AB307-0294).